The chain runs to 500 residues: Glycerol kinase (500 aa).

T16 lines the ADP pocket. Residues T16 and T17 each coordinate ATP. T16 provides a ligand contact to sn-glycerol 3-phosphate. Position 20 (R20) interacts with ADP. The sn-glycerol 3-phosphate site is built by R86, E87, Y138, and D243. Positions 86, 87, 138, 243, and 244 each coordinate glycerol. ADP is bound by residues T265 and G313. ATP is bound by residues T265, G313, Q317, and G414. Positions 414 and 418 each coordinate ADP.

This sequence belongs to the FGGY kinase family.

The enzyme catalyses glycerol + ATP = sn-glycerol 3-phosphate + ADP + H(+). It functions in the pathway polyol metabolism; glycerol degradation via glycerol kinase pathway; sn-glycerol 3-phosphate from glycerol: step 1/1. With respect to regulation, inhibited by fructose 1,6-bisphosphate (FBP). Its function is as follows. Key enzyme in the regulation of glycerol uptake and metabolism. Catalyzes the phosphorylation of glycerol to yield sn-glycerol 3-phosphate. This chain is Glycerol kinase, found in Nostoc sp. (strain PCC 7120 / SAG 25.82 / UTEX 2576).